A 1056-amino-acid polypeptide reads, in one-letter code: E3 SUMO-protein ligase ZNF451 (1056 aa).

A disordered region spans residues 1-39; the sequence is MGDPGPEIIESVPPAGPEASESTTDENEDDIQFVSEGPL. The sufficient for E3 SUMO-protein ligase activity stretch occupies residues 1–246; that stretch reads MGDPGPEIIE…AADGHSNSLL (246 aa). Residues 1–344 form an important for interaction with SUMO1 and SUMO2 region; it reads MGDPGPEIIE…RVRCQNAGPV (344 aa). Residues 30–37 are interaction with SUMO2 1; that stretch reads DIQFVSEG. Positions 38–41 match the PLRP motif; sequence PLRP. Residues 42–50 are interaction with SUMO2 2; sequence VLEYIDLVS. Residues Lys-75, Lys-77, Lys-106, Lys-139, and Lys-153 each participate in a glycyl lysine isopeptide (Lys-Gly) (interchain with G-Cter in SUMO2) cross-link. Residue Ser-155 is modified to Phosphoserine. Arg-158 carries the post-translational modification Omega-N-methylarginine. Lys-167 is covalently cross-linked (Glycyl lysine isopeptide (Lys-Gly) (interchain with G-Cter in SUMO2)). Positions 168–521 are important for interaction with SMAD4; the sequence is PILCPIMHCN…HMSRFHGGAH (354 aa). A C2H2-type 1 zinc finger spans residues 169 to 195; the sequence is ILCPIMHCNKEFDNGHLLLGHLKRFDH. The segment at 212–234 adopts a C2H2-type 2; degenerate zinc-finger fold; that stretch reads FACAVCYEHFVTQQQYKDHLLSR. The C2H2-type 3 zinc-finger motif lies at 253-277; it reads YACPQCFLLFSTKDECLKHMSTKNH. Glycyl lysine isopeptide (Lys-Gly) (interchain with G-Cter in SUMO2) cross-links involve residues Lys-270, Lys-275, Lys-283, Lys-288, Lys-301, and Lys-309. The C2H2-type 4; atypical zinc finger occupies 315-338; that stretch reads VKCVACHQTLRSHMELTAHFRVRC. Residues 362-385 form a C2H2-type 5 zinc finger; the sequence is GYCSDCNQVFMDVASTQSHKNSGH. Residue Lys-420 forms a Glycyl lysine isopeptide (Lys-Gly) (interchain with G-Cter in SUMO2) linkage. Ser-429 carries the post-translational modification Phosphoserine. Lys-431 participates in a covalent cross-link: Glycyl lysine isopeptide (Lys-Gly) (interchain with G-Cter in SUMO2). 2 consecutive C2H2-type zinc fingers follow at residues 494-517 and 527-550; these read YKCV…SRFH and FWCR…TEFH. Residues Lys-539 and Lys-583 each participate in a glycyl lysine isopeptide (Lys-Gly) (interchain with G-Cter in SUMO2) cross-link. The C2H2-type 8; atypical zinc-finger motif lies at 604 to 629; sequence WQCRICEDMFESQECVKQHCMSLTSH. 2 consecutive C2H2-type zinc fingers follow at residues 634–657 and 665–688; these read YSCA…QDEH and YFCG…KEHH. Residue Lys-645 forms a Glycyl lysine isopeptide (Lys-Gly) (interchain with G-Cter in SUMO2) linkage. Residue Lys-704 forms a Glycyl lysine isopeptide (Lys-Gly) (interchain with G-Cter in SUMO1); alternate linkage. Lys-704 is covalently cross-linked (Glycyl lysine isopeptide (Lys-Gly) (interchain with G-Cter in SUMO2); alternate). Residues Lys-729 and Lys-746 each participate in a glycyl lysine isopeptide (Lys-Gly) (interchain with G-Cter in SUMO2) cross-link. C2H2-type zinc fingers lie at residues 751–774 and 787–810; these read FRCS…CQVH and IKCG…HRKH. Residues Lys-788, Lys-815, Lys-843, Lys-849, Lys-947, Lys-988, and Lys-989 each participate in a glycyl lysine isopeptide (Lys-Gly) (interchain with G-Cter in SUMO2) cross-link. Disordered stretches follow at residues 806–830 and 839–858; these read FHRK…STCQ and EKNL…KGAE. Residues 849–858 are compositionally biased toward basic and acidic residues; it reads KHSDVEKGAE. Positions 1019–1045 are disordered; sequence KECDSDDSSGMKGSPAEELRATEDVEL. Residues 1033–1045 show a composition bias toward basic and acidic residues; sequence PAEELRATEDVEL. Positions 1045 to 1056 are important for ubiquitin binding; sequence LEEAIRRSLEEM.

This sequence belongs to the krueppel C2H2-type zinc-finger protein family. In terms of assembly, homooligomer. Interacts (via N-terminal region) with SUMO1. Interacts (via N-terminal region) with SUMO2. Interacts simultaneously with two SUMO2 chains. Identified in a complex with SUMO2 and UBE2I/UBC9, where one ZNF451 interacts with one UBE2I/UBC9 and two SUMO2 chains, one bound to the UBE2I/UBC9 active site and the other to another region of the same UBE2I/UBC9 molecule. Interacts (via C-terminus) with ubiquitin. Interacts (via N-terminal zinc-finger domains) with SMAD4 (via MH2 domain). Interacts with SMAD2 and SMAD3. Identified in a complex that contains at least ZNF451, SMAD2, SMAD3 and SMAD4. Interacts with EP300. Inhibits interaction between EP300 and the SMAD4 complex. Interacts with SIMC1. Post-translationally, sumoylated. Predominantly sumoylated on the N-terminal region that is important for interaction with SUMO1 and SUMO2. Sumoylation is important for localization in nuclear granules; desumoylation leads to diffuse nucleoplasmic location. Autosumoylated (in vitro). Sumoylation enhances E3 SUMO-protein ligase activity.

The protein localises to the nucleus. Its subcellular location is the PML body. It is found in the nucleoplasm. It participates in protein modification; protein sumoylation. In terms of biological role, E3 SUMO-protein ligase; has a preference for SUMO2 and SUMO3 and facilitates UBE2I/UBC9-mediated sumoylation of target proteins. Plays a role in protein SUMO2 modification in response to stress caused by DNA damage and by proteasome inhibitors (in vitro). Required for MCM4 sumoylation. Has no activity with SUMO1. Preferentially transfers an additional SUMO2 chain onto the SUMO2 consensus site 'Lys-11'. Negatively regulates transcriptional activation mediated by the SMAD4 complex in response to TGF-beta signaling. Inhibits EP300-mediated acetylation of histone H3 at 'Lys-9'. Plays a role in regulating the transcription of AR targets. The protein is E3 SUMO-protein ligase ZNF451 (Znf451) of Mus musculus (Mouse).